The chain runs to 385 residues: 8-amino-7-oxononanoate synthase (385 aa).

Arg-21 is a binding site for substrate. 108–109 (GF) contacts pyridoxal 5'-phosphate. His-133 serves as a coordination point for substrate. Residues Ser-179, His-207, and Thr-233 each contribute to the pyridoxal 5'-phosphate site. At Lys-236 the chain carries N6-(pyridoxal phosphate)lysine. Thr-352 serves as a coordination point for substrate.

This sequence belongs to the class-II pyridoxal-phosphate-dependent aminotransferase family. BioF subfamily. Homodimer. Pyridoxal 5'-phosphate serves as cofactor.

The catalysed reaction is 6-carboxyhexanoyl-[ACP] + L-alanine + H(+) = (8S)-8-amino-7-oxononanoate + holo-[ACP] + CO2. It functions in the pathway cofactor biosynthesis; biotin biosynthesis. Catalyzes the decarboxylative condensation of pimeloyl-[acyl-carrier protein] and L-alanine to produce 8-amino-7-oxononanoate (AON), [acyl-carrier protein], and carbon dioxide. This is 8-amino-7-oxononanoate synthase from Salmonella schwarzengrund (strain CVM19633).